Reading from the N-terminus, the 157-residue chain is Peptide methionine sulfoxide reductase MsrA (157 aa).

The active site involves cysteine 13.

The protein belongs to the MsrA Met sulfoxide reductase family.

The enzyme catalyses L-methionyl-[protein] + [thioredoxin]-disulfide + H2O = L-methionyl-(S)-S-oxide-[protein] + [thioredoxin]-dithiol. It catalyses the reaction [thioredoxin]-disulfide + L-methionine + H2O = L-methionine (S)-S-oxide + [thioredoxin]-dithiol. Functionally, has an important function as a repair enzyme for proteins that have been inactivated by oxidation. Catalyzes the reversible oxidation-reduction of methionine sulfoxide in proteins to methionine. The sequence is that of Peptide methionine sulfoxide reductase MsrA from Methanococcus maripaludis (strain C6 / ATCC BAA-1332).